Reading from the N-terminus, the 400-residue chain is Exodeoxyribonuclease 7 large subunit (400 aa).

The protein belongs to the XseA family. Heterooligomer composed of large and small subunits.

The protein localises to the cytoplasm. The catalysed reaction is Exonucleolytic cleavage in either 5'- to 3'- or 3'- to 5'-direction to yield nucleoside 5'-phosphates.. In terms of biological role, bidirectionally degrades single-stranded DNA into large acid-insoluble oligonucleotides, which are then degraded further into small acid-soluble oligonucleotides. The polypeptide is Exodeoxyribonuclease 7 large subunit (Clostridium kluyveri (strain NBRC 12016)).